The chain runs to 323 residues: tRNA dimethylallyltransferase (323 aa).

Residue 12–19 (GPTAAGKT) participates in ATP binding. Residue 14 to 19 (TAAGKT) participates in substrate binding. Interaction with substrate tRNA stretches follow at residues 37–40 (DSAL) and 161–165 (QRLIR).

The protein belongs to the IPP transferase family. Monomer. It depends on Mg(2+) as a cofactor.

The catalysed reaction is adenosine(37) in tRNA + dimethylallyl diphosphate = N(6)-dimethylallyladenosine(37) in tRNA + diphosphate. In terms of biological role, catalyzes the transfer of a dimethylallyl group onto the adenine at position 37 in tRNAs that read codons beginning with uridine, leading to the formation of N6-(dimethylallyl)adenosine (i(6)A). In Pseudomonas putida (strain GB-1), this protein is tRNA dimethylallyltransferase.